We begin with the raw amino-acid sequence, 172 residues long: Single-stranded DNA-binding protein A (172 aa).

Residues 1–104 (MLNRVVLVGR…VQAESVQFLE (104 aa)) form the SSB domain. Tyrosine 82 carries the post-translational modification Phosphotyrosine. The disordered stretch occupies residues 103–172 (LEPKNGGGSG…IDISDDDLPF (70 aa)). The segment covering 107-131 (NGGGSGSGGYNEGNSGGGQYFGGGQ) has biased composition (gly residues). Low complexity predominate over residues 132-149 (NDNPFGGNQNNQRRNQGN). Residues 167–172 (DDDLPF) carry the Important for interaction with partner proteins motif.

Homotetramer. Interacts with proteins involved in DNA metabolism such as PriA, RecQ, RecG, RecS, DnaE, RarA, RecJ, RecO, SbcC, RecD2 (formerly YrrC), XseA and Ung. Interacts with RecQ via its 10 C-terminal residues. Interacts with RecD2. Phosphorylated by YwqD, which increases ssDNA affinity; dephosphorylated by YwqE.

It is found in the cytoplasm. The protein resides in the nucleoid. Plays an important role in DNA replication, recombination and repair. Binds to single-stranded (ss)DNA and to an array of partner proteins to recruit them to their sites of action during DNA metabolism. Associates with oriC, this requires DnaA. SsbA binding to ssDNA prevents DnaB and DnaD individually from binding to DNA. Has a 20-fold higher affinity for ssDNA than SsbB; SsbA and DprA activate the homologous DNA strand exchange function of RecA-ATP. Enhances the activity of 3'-5' DNA helicase RecQ. This is Single-stranded DNA-binding protein A (ssbA) from Bacillus subtilis (strain 168).